The sequence spans 406 residues: Calsequestrin-2 (406 aa).

The N-terminal stretch at 1–19 (MKATCWILAGFCLLFCCKA) is a signal peptide. Residue N335 is glycosylated (N-linked (GlcNAc...) asparagine). The segment at 365–406 (VLSGKINTEDDDDDDDDDDDDDDDDDDDDDDDDDDDDDDDDD) is disordered. Positions 373–406 (EDDDDDDDDDDDDDDDDDDDDDDDDDDDDDDDDD) are enriched in acidic residues.

This sequence belongs to the calsequestrin family. Skeletal and heart muscle.

The protein localises to the sarcoplasmic reticulum lumen. In terms of biological role, calsequestrin is a high-capacity, moderate affinity, calcium-binding protein and thus acts as an internal calcium store in muscle. Calcium ions are bound by clusters of acidic residues at the protein surface, especially at the interface between subunits. Can bind around 60 Ca(2+) ions. Regulates the release of lumenal Ca(2+) via the calcium release channel RYR2; this plays an important role in triggering muscle contraction. Plays a role in excitation-contraction coupling in the heart and in regulating the rate of heart beats. This is Calsequestrin-2 (CASQ2) from Gallus gallus (Chicken).